The sequence spans 304 residues: Cytochrome c biogenesis protein CcsA (304 aa).

Transmembrane regions (helical) follow at residues 8-28 (LVTS…PIAF), 37-57 (PGVV…QLVL), 63-83 (GHFP…ACTL), 96-116 (IVAA…SFAL), 141-161 (VIMV…AVLV), 212-232 (TITV…VWAN), 246-263 (TWAL…HTRL), and 275-295 (VAVV…LLGI).

Belongs to the CcmF/CycK/Ccl1/NrfE/CcsA family. May interact with ccs1.

It localises to the cellular thylakoid membrane. Its function is as follows. Required during biogenesis of c-type cytochromes (cytochrome c6 and cytochrome f) at the step of heme attachment. The polypeptide is Cytochrome c biogenesis protein CcsA (Synechococcus sp. (strain CC9902)).